The following is a 143-amino-acid chain: Large ribosomal subunit protein uL11 (143 aa).

It belongs to the universal ribosomal protein uL11 family. As to quaternary structure, part of the ribosomal stalk of the 50S ribosomal subunit. Interacts with L10 and the large rRNA to form the base of the stalk. L10 forms an elongated spine to which L12 dimers bind in a sequential fashion forming a multimeric L10(L12)X complex. One or more lysine residues are methylated.

In terms of biological role, forms part of the ribosomal stalk which helps the ribosome interact with GTP-bound translation factors. This Pseudomonas fluorescens (strain SBW25) protein is Large ribosomal subunit protein uL11.